The following is a 117-amino-acid chain: Large ribosomal subunit protein uL18 (117 aa).

Belongs to the universal ribosomal protein uL18 family. As to quaternary structure, part of the 50S ribosomal subunit; part of the 5S rRNA/L5/L18/L25 subcomplex. Contacts the 5S and 23S rRNAs.

Functionally, this is one of the proteins that bind and probably mediate the attachment of the 5S RNA into the large ribosomal subunit, where it forms part of the central protuberance. The protein is Large ribosomal subunit protein uL18 of Phytoplasma mali (strain AT).